The primary structure comprises 238 residues: MKYAGILAGGIGSRMGNVPLPKQFLDLDNKPILIHTLEKFILINDFEKIIIATPQQWMTHTKDTLRKFKISDERIEVIQGGSDRNDTIMNIVKHIESTNGINDDDVIVTHDAVRPFLTHRIIKENIQAALEYGAVDTVIDAIDTIVTSKDNQTIDAIPVRNEMYQGQTPQSFNINLLKESYAQLSDEQKSILSDACKIIVETNKPVRLVKGELYNIKVTTPYDLKVANAIIRGGIADD.

Residues Leu7–Gly10 and Gly81–Thr87 each bind CTP.

The protein belongs to the IspD/TarI cytidylyltransferase family. TarI subfamily.

The enzyme catalyses D-ribitol 5-phosphate + CTP + H(+) = CDP-L-ribitol + diphosphate. It functions in the pathway cell wall biogenesis; poly(ribitol phosphate) teichoic acid biosynthesis. Functionally, catalyzes the transfer of the cytidylyl group of CTP to D-ribitol 5-phosphate. In Staphylococcus aureus (strain USA300), this protein is Ribitol-5-phosphate cytidylyltransferase 1.